The primary structure comprises 442 residues: G-protein coupled receptor family C group 5 member C (442 aa).

An N-terminal signal peptide occupies residues 1 to 23 (MAIHRTVLMCLGLPLFLLPGARA). The Extracellular segment spans residues 24–50 (QEQAPPGCSPDLNPLYYNLCDRSEAWG). Residues 51–71 (IILEAVAGAGVVTTFVLTIIL) form a helical membrane-spanning segment. At 72–85 (VASLPFVQDTKKRS) the chain is on the cytoplasmic side. Residues 86-106 (LLGTQVFFLLGTLGLFCLVFA) form a helical membrane-spanning segment. The Extracellular portion of the chain corresponds to 107–120 (CVVKPSFSTCASRR). The chain crosses the membrane as a helical span at residues 121–141 (FLFGVLFAICFSCLVAHVLAL). Residues 142 to 155 (HFLVRKNHGPRGWV) lie on the Cytoplasmic side of the membrane. A helical transmembrane segment spans residues 156 to 176 (IFLVALLLSLVEVIINTEWLI). Topologically, residues 177-209 (ITLVRGAGTEGDALGNGSAGWVAVSPCAIANAD) are extracellular. Asn192 carries N-linked (GlcNAc...) asparagine glycosylation. Residues 210-230 (FVMALIYVMLLLLCAFSGAWS) form a helical membrane-spanning segment. Residues 231-242 (ALCGRFKRWRKH) lie on the Cytoplasmic side of the membrane. Residues 243–263 (GVFILLTTTASIAVWVVWIVM) traverse the membrane as a helical segment. Residues 264–280 (YTYGNRQHNSPTWDDPT) are Extracellular-facing. The chain crosses the membrane as a helical span at residues 281–301 (LAIALATNAWAFVLFYVIPEV). At 302–442 (SQVTRSSPEQ…QVFRNPYVWD (141 aa)) the chain is on the cytoplasmic side. 4 positions are modified to phosphoserine: Ser345, Ser384, Ser404, and Ser407. Tyr415 is subject to Phosphotyrosine. Thr424 is modified (phosphothreonine).

The protein belongs to the G-protein coupled receptor 3 family.

The protein resides in the cell membrane. This retinoic acid-inducible G-protein coupled receptor provide evidence for a possible interaction between retinoid and G-protein signaling pathways. The protein is G-protein coupled receptor family C group 5 member C (GPRC5C) of Bos taurus (Bovine).